Reading from the N-terminus, the 908-residue chain is Protein translocase subunit SecA (908 aa).

Residues Gln-90, 108 to 112 (GEGKT), and Asp-503 each bind ATP. Over residues 846–864 (AAAAEAPVAPAPQPAAAAP) the composition is skewed to low complexity. The tract at residues 846–884 (AAAAEAPVAPAPQPAAAAPQPTPELVGAEAGEPDPAAWG) is disordered. 4 residues coordinate Zn(2+): Cys-892, Cys-894, Cys-903, and His-904.

This sequence belongs to the SecA family. Monomer and homodimer. Part of the essential Sec protein translocation apparatus which comprises SecA, SecYEG and auxiliary proteins SecDF-YajC and YidC. The cofactor is Zn(2+).

It localises to the cell inner membrane. The protein resides in the cytoplasm. It carries out the reaction ATP + H2O + cellular proteinSide 1 = ADP + phosphate + cellular proteinSide 2.. In terms of biological role, part of the Sec protein translocase complex. Interacts with the SecYEG preprotein conducting channel. Has a central role in coupling the hydrolysis of ATP to the transfer of proteins into and across the cell membrane, serving both as a receptor for the preprotein-SecB complex and as an ATP-driven molecular motor driving the stepwise translocation of polypeptide chains across the membrane. The sequence is that of Protein translocase subunit SecA from Cereibacter sphaeroides (strain KD131 / KCTC 12085) (Rhodobacter sphaeroides).